A 235-amino-acid polypeptide reads, in one-letter code: Large ribosomal subunit protein uL1 (235 aa).

Belongs to the universal ribosomal protein uL1 family. Part of the 50S ribosomal subunit.

Its function is as follows. Binds directly to 23S rRNA. The L1 stalk is quite mobile in the ribosome, and is involved in E site tRNA release. Protein L1 is also a translational repressor protein, it controls the translation of the L11 operon by binding to its mRNA. This Prochlorococcus marinus (strain MIT 9301) protein is Large ribosomal subunit protein uL1.